Consider the following 507-residue polypeptide: MEKWYLMTVVVLIGLTVRWTVSLNSYSGAGKPPMFGDYEAQRHWQEITFNLPVKQWYFNSSDNNLQYWGLDYPPPTAYHSLLCAYVAKFINPDWIALHTSRGYESQAHKLFMRTTVLIADLLIYIPAVVLYCCCLKEISTKKKIANALCILLYPGLILIDYGHFQYNSVSLGFALWGVLGISCDCDLLGSLAFCLAINYKQMELYHALPFFCFLLGKCFKKGLKGKGFVLLVKLACIVVASFVLCWLPFFTEREQTLQVLRRLFPVDRGLFEDKVANIWCSFNVFLKIKDILPRHIQLIMSFCFTFLSLLPACIKLILQPSSKGFKFTLVSCALSFFLFSFQVHEKSILLVSLPVCLVLSEIPFMSTWFLLVSTFSMLPLLLKDELLMPSVVTTMAFFIACVTSFSIFEKTSEEELQLKSFSISVRKYLPCFTFLSRIIQYLFLISVITMVLLTLMTVTLGPPQKLPDLFSVLVCFVSCLNFLFFLVYFNIIIVWDSKSGRNQKKIS.

At 1-3 the chain is on the cytoplasmic side; it reads MEK. Residues 4-24 form a helical membrane-spanning segment; sequence WYLMTVVVLIGLTVRWTVSLN. At 25 to 114 the chain is on the lumenal side; it reads SYSGAGKPPM…SQAHKLFMRT (90 aa). Asn59 carries N-linked (GlcNAc...) asparagine glycosylation. Residues 115 to 135 traverse the membrane as a helical segment; that stretch reads TVLIADLLIYIPAVVLYCCCL. Residues 136–143 lie on the Cytoplasmic side of the membrane; it reads KEISTKKK. Residues 144 to 164 traverse the membrane as a helical segment; it reads IANALCILLYPGLILIDYGHF. The Lumenal segment spans residues 165–172; sequence QYNSVSLG. The chain crosses the membrane as a helical span at residues 173-193; that stretch reads FALWGVLGISCDCDLLGSLAF. Topologically, residues 194–226 are cytoplasmic; it reads CLAINYKQMELYHALPFFCFLLGKCFKKGLKGK. Residues 227–247 traverse the membrane as a helical segment; the sequence is GFVLLVKLACIVVASFVLCWL. Residues 248-297 are Lumenal-facing; it reads PFFTEREQTLQVLRRLFPVDRGLFEDKVANIWCSFNVFLKIKDILPRHIQ. The helical transmembrane segment at 298-318 threads the bilayer; sequence LIMSFCFTFLSLLPACIKLIL. At 319–323 the chain is on the cytoplasmic side; it reads QPSSK. Residues 324–344 traverse the membrane as a helical segment; it reads GFKFTLVSCALSFFLFSFQVH. Residues 345 to 361 lie on the Lumenal side of the membrane; it reads EKSILLVSLPVCLVLSE. A helical membrane pass occupies residues 362–382; that stretch reads IPFMSTWFLLVSTFSMLPLLL. The Cytoplasmic segment spans residues 383-387; that stretch reads KDELL. A helical transmembrane segment spans residues 388 to 408; the sequence is MPSVVTTMAFFIACVTSFSIF. Residues 409-437 are Lumenal-facing; that stretch reads EKTSEEELQLKSFSISVRKYLPCFTFLSR. Residues 438–458 form a helical membrane-spanning segment; it reads IIQYLFLISVITMVLLTLMTV. The Cytoplasmic segment spans residues 459 to 473; it reads TLGPPQKLPDLFSVL. The chain crosses the membrane as a helical span at residues 474–494; sequence VCFVSCLNFLFFLVYFNIIIV. The Lumenal portion of the chain corresponds to 495 to 507; that stretch reads WDSKSGRNQKKIS.

Belongs to the ALG6/ALG8 glucosyltransferase family.

It localises to the endoplasmic reticulum membrane. It carries out the reaction an alpha-D-Man-(1-&gt;2)-alpha-D-Man-(1-&gt;2)-alpha-D-Man-(1-&gt;3)-[alpha-D-Man-(1-&gt;2)-alpha-D-Man-(1-&gt;3)-[alpha-D-Man-(1-&gt;2)-alpha-D-Man-(1-&gt;6)]-alpha-D-Man-(1-&gt;6)]-beta-D-Man-(1-&gt;4)-beta-D-GlcNAc-(1-&gt;4)-alpha-D-GlcNAc-diphospho-di-trans,poly-cis-dolichol + a di-trans,poly-cis-dolichyl beta-D-glucosyl phosphate = an alpha-D-Glc-(1-&gt;3)-alpha-D-Man-(1-&gt;2)-alpha-D-Man-(1-&gt;2)-alpha-D-Man-(1-&gt;3)-[alpha-D-Man-(1-&gt;2)-alpha-D-Man-(1-&gt;3)-[alpha-D-Man-(1-&gt;2)-alpha-D-Man-(1-&gt;6)]-alpha-D-Man-(1-&gt;6)]-beta-D-Man-(1-&gt;4)-beta-D-GlcNAc-(1-&gt;4)-alpha-D-GlcNAc-diphospho-di-trans,poly-cis-dolichol + a di-trans,poly-cis-dolichyl phosphate + H(+). It functions in the pathway protein modification; protein glycosylation. Its function is as follows. Dolichyl pyrophosphate Man9GlcNAc2 alpha-1,3-glucosyltransferase that operates in the biosynthetic pathway of dolichol-linked oligosaccharides, the glycan precursors employed in protein asparagine (N)-glycosylation. The assembly of dolichol-linked oligosaccharides begins on the cytosolic side of the endoplasmic reticulum membrane and finishes in its lumen. The sequential addition of sugars to dolichol pyrophosphate produces dolichol-linked oligosaccharides containing fourteen sugars, including two GlcNAcs, nine mannoses and three glucoses. Once assembled, the oligosaccharide is transferred from the lipid to nascent proteins by oligosaccharyltransferases. In the lumen of the endoplasmic reticulum, adds the first glucose residue from dolichyl phosphate glucose (Dol-P-Glc) onto the lipid-linked oligosaccharide intermediate Man(9)GlcNAc(2)-PP-Dol to produce Glc(1)Man(9)GlcNAc(2)-PP-Dol. Glc(1)Man(9)GlcNAc(2)-PP-Dol is a substrate for ALG8, the following enzyme in the biosynthetic pathway. The polypeptide is Dolichyl pyrophosphate Man9GlcNAc2 alpha-1,3-glucosyltransferase (Pongo abelii (Sumatran orangutan)).